The following is a 602-amino-acid chain: Protein nessun dorma (602 aa).

The stretch at 188-208 (AEAKYIQQRLDYLELDLSDAE) forms a coiled coil.

As to quaternary structure, interacts (via N-terminus) with both members of the centralspindlin complex, Pav and Tum. In terms of tissue distribution, detected in testis (at protein level). Also expressed in ovary.

It is found in the midbody. Required during male meiosis for completion of spermatocyte cytokinesis and possibly also required in female germline cells. Also involved in ring canal formation in male and female germline cells. Not essential for cleavage furrow ingression but is required for contractile ring stability and the attachment of the furrowing membrane to the actomyosin ring in late telophase. Displays high binding affinity for beta-galactosides. In Drosophila melanogaster (Fruit fly), this protein is Protein nessun dorma.